A 551-amino-acid chain; its full sequence is Interferon-induced, double-stranded RNA-activated protein kinase (551 aa).

Ala-2 is subject to N-acetylalanine. The tract at residues 2–180 (AGDLSAGFFM…SVKSDYLSSG (179 aa)) is (Microbial infection) Interaction with HCV NS5A. The DRBM 1 domain maps to 9-77 (FFMEELNTYR…AKLAVEILNK (69 aa)). Residue Lys-69 forms a Glycyl lysine isopeptide (Lys-Gly) (interchain with G-Cter in ISG15) linkage. At Ser-83 the chain carries Phosphoserine. Phosphothreonine; by autocatalysis is present on residues Thr-88, Thr-89, and Thr-90. The DRBM 2 domain occupies 100–167 (NYIGLINRIA…AKLAYLQILS (68 aa)). Phosphotyrosine; by autocatalysis is present on Tyr-101. A Glycyl lysine isopeptide (Lys-Gly) (interchain with G-Cter in ISG15) cross-link involves residue Lys-159. Tyr-162 is subject to Phosphotyrosine; by autocatalysis. The span at 202-215 (SSSEGDFSADTSEI) shows a compositional bias: polar residues. Positions 202 to 222 (SSSEGDFSADTSEINSNSDSL) are disordered. Ser-242 is modified (phosphoserine; by autocatalysis). Thr-255 and Thr-258 each carry phosphothreonine; by autocatalysis. The dimerization stretch occupies residues 266 to 362 (DFKEIELIGS…NSSRSKTKCL (97 aa)). The segment at 266–551 (DFKEIELIGS…SPEKNERHTC (286 aa)) is interaction with TRAF5. In terms of domain architecture, Protein kinase spans 267–538 (FKEIELIGSG…TSEILRTLTV (272 aa)). 273 to 281 (IGSGGFGQV) is a binding site for ATP. Tyr-293 carries the phosphotyrosine; by autocatalysis modification. Lys-296 provides a ligand contact to ATP. Tandem repeats lie at residues 331–343 (DYDPETSDDSLES) and 345–357 (DYDPENSKNSSRS). The interval 331–357 (DYDPETSDDSLESSDYDPENSKNSSRS) is 2 X 13 AA approximate repeats. The tract at residues 379–496 (EKRRGEKLDK…TAFETSKFFT (118 aa)) is interaction with EIF2S1/EIF-2ALPHA. Asp-414 acts as the Proton acceptor in catalysis. Asp-432 is a Mg(2+) binding site. A phosphothreonine; by autocatalysis mark is found at Thr-446 and Thr-451. Residues Ser-456 and Ser-542 each carry the phosphoserine modification.

It belongs to the protein kinase superfamily. Ser/Thr protein kinase family. GCN2 subfamily. Homodimer. Interacts with STRBP. Interacts with DNAJC3. Forms a complex with FANCA, FANCC, FANCG and HSP70. Interacts with ADAR/ADAR1. Interacts with IRS1. The inactive form interacts with NCK1 and GSN. Interacts (via the kinase catalytic domain) with STAT3 (via SH2 domain), TRAF2 (C-terminus), TRAF5 (C-terminus) and TRAF6 (C-terminus). Interacts with MAP2K6, IKBKB/IKKB, NPM1, TARBP2, NLRP1, NLRP3, NLRC4 and AIM2. Interacts (via DRBM 1 domain) with DUS2L (via DRBM domain). Interacts with DHX9 (via N-terminus) and this interaction is dependent upon activation of the kinase. Interacts with EIF2S1/EIF-2ALPHA; this interaction induces a conformational change in EIF2S1 and its phosphorylation by EIF2AK2. As to quaternary structure, (Microbial infection) Interacts with human cytomegalovirus (HCMV) TRS1; this interaction retains EIF2AK2 to the nucleus and prevents its activation. In terms of assembly, (Microbial infection) Interacts with vaccinia virus protein K3 (K3L); this interaction inhibits EIF2AK2. (Microbial infection) Interacts with human herpes simplex virus 1 (HHV-1) protein US11 in an RNA-dependent manner. As to quaternary structure, (Microbial infection) The inactive form interacts with Toscana virus (TOS) NSS. In terms of assembly, (Microbial infection) Interacts with herpes virus 8 protein v-IRF2; this interaction inhibits EIF2AK2 activation. (Microbial infection) Interacts with vaccinia protein E3. As to quaternary structure, (Microbial infection) Interacts (via N-terminus) with Hepatitis C virus (HCV) mature core protein (via N-terminus); this interaction induces the autophosphorylation of EIF2AK2. In terms of assembly, (Microbial infection) Interacts with Hepatitis C virus (HCV) non-structural protein 5A (NS5A); this interaction leads to disruption of EIF2AK2 dimerization by NS5A. (Microbial infection) Interacts with Hepatitis C virus (HCV) envelope glycoprotein E2; this interaction inhibits EIF2AK2 and blocks its inhibitory effect on protein synthesis and cell growth. As to quaternary structure, (Microbial infection) Interacts with human respiratory syncytial virus (HRSV) nucleoprotein; this interaction inhibits EIF2AK2 phosphorylation of EIF2S1 and blocks EIF2AK2-mediated translation shutoff. In terms of assembly, (Microbial infection) Interacts with human herpesvirus 8 protein MTA/ORF57; this interaction inhibits stress granule formation. Mg(2+) is required as a cofactor. In terms of processing, autophosphorylated on several Ser, Thr and Tyr residues. Autophosphorylation of Thr-451 is dependent on Thr-446 and is stimulated by dsRNA binding and dimerization. Autophosphorylation apparently leads to the activation of the kinase. Tyrosine autophosphorylation is essential for efficient dsRNA-binding, dimerization, and kinase activation. As to expression, highly expressed in thymus, spleen and bone marrow compared to non-hematopoietic tissues such as small intestine, liver, or kidney tissues. Colocalizes with GSK3B and TAU in the Alzheimer disease (AD) brain. Elevated levels seen in breast and colon carcinomas, and which correlates with tumor progression and invasiveness or risk of progression.

The protein resides in the cytoplasm. It localises to the nucleus. It is found in the perinuclear region. The enzyme catalyses L-seryl-[protein] + ATP = O-phospho-L-seryl-[protein] + ADP + H(+). It catalyses the reaction L-threonyl-[protein] + ATP = O-phospho-L-threonyl-[protein] + ADP + H(+). It carries out the reaction L-tyrosyl-[protein] + ATP = O-phospho-L-tyrosyl-[protein] + ADP + H(+). Initially produced in an inactive form and is activated by binding to viral dsRNA, which causes dimerization and autophosphorylation in the activation loop and stimulation of function. ISGylation can activate it in the absence of viral infection. Can also be activated by heparin, pro-inflammatory stimuli, growth factors, cytokines, oxidative stress and the cellular protein PRKRA. Activity is markedly stimulated by manganese ions. Activation is blocked by the viral components HIV-1 Tat protein and large amounts of HIV-1 trans-activation response (TAR) RNA element as well as by the cellular proteins TARBP2, DUS2L, NPM1, NCK1 and ADAR. Down-regulated by Toscana virus (TOS) and Rift valley fever virus (RVFV) NSS which promote its proteasomal degradation. Inhibited by vaccinia virus protein E3, probably via dsRNA sequestering. IFN-induced dsRNA-dependent serine/threonine-protein kinase that phosphorylates the alpha subunit of eukaryotic translation initiation factor 2 (EIF2S1/eIF-2-alpha) and plays a key role in the innate immune response to viral infection. Inhibits viral replication via the integrated stress response (ISR): EIF2S1/eIF-2-alpha phosphorylation in response to viral infection converts EIF2S1/eIF-2-alpha in a global protein synthesis inhibitor, resulting to a shutdown of cellular and viral protein synthesis, while concomitantly initiating the preferential translation of ISR-specific mRNAs, such as the transcriptional activator ATF4. Exerts its antiviral activity on a wide range of DNA and RNA viruses including hepatitis C virus (HCV), hepatitis B virus (HBV), measles virus (MV) and herpes simplex virus 1 (HHV-1). Also involved in the regulation of signal transduction, apoptosis, cell proliferation and differentiation: phosphorylates other substrates including p53/TP53, PPP2R5A, DHX9, ILF3, IRS1 and the HHV-1 viral protein US11. In addition to serine/threonine-protein kinase activity, also has tyrosine-protein kinase activity and phosphorylates CDK1 at 'Tyr-4' upon DNA damage, facilitating its ubiquitination and proteasomal degradation. Either as an adapter protein and/or via its kinase activity, can regulate various signaling pathways (p38 MAP kinase, NF-kappa-B and insulin signaling pathways) and transcription factors (JUN, STAT1, STAT3, IRF1, ATF3) involved in the expression of genes encoding pro-inflammatory cytokines and IFNs. Activates the NF-kappa-B pathway via interaction with IKBKB and TRAF family of proteins and activates the p38 MAP kinase pathway via interaction with MAP2K6. Can act as both a positive and negative regulator of the insulin signaling pathway (ISP). Negatively regulates ISP by inducing the inhibitory phosphorylation of insulin receptor substrate 1 (IRS1) at 'Ser-312' and positively regulates ISP via phosphorylation of PPP2R5A which activates FOXO1, which in turn up-regulates the expression of insulin receptor substrate 2 (IRS2). Can regulate NLRP3 inflammasome assembly and the activation of NLRP3, NLRP1, AIM2 and NLRC4 inflammasomes. Plays a role in the regulation of the cytoskeleton by binding to gelsolin (GSN), sequestering the protein in an inactive conformation away from actin. This Homo sapiens (Human) protein is Interferon-induced, double-stranded RNA-activated protein kinase (EIF2AK2).